The sequence spans 886 residues: Alanine--tRNA ligase (886 aa).

Zn(2+) contacts are provided by His564, His568, Cys666, and His670.

It belongs to the class-II aminoacyl-tRNA synthetase family. Zn(2+) is required as a cofactor.

The protein localises to the cytoplasm. It catalyses the reaction tRNA(Ala) + L-alanine + ATP = L-alanyl-tRNA(Ala) + AMP + diphosphate. Catalyzes the attachment of alanine to tRNA(Ala) in a two-step reaction: alanine is first activated by ATP to form Ala-AMP and then transferred to the acceptor end of tRNA(Ala). Also edits incorrectly charged Ser-tRNA(Ala) and Gly-tRNA(Ala) via its editing domain. This is Alanine--tRNA ligase from Prochlorococcus marinus subsp. pastoris (strain CCMP1986 / NIES-2087 / MED4).